The sequence spans 618 residues: D-glucuronyl C5-epimerase (618 aa).

At 1 to 11 the chain is on the cytoplasmic side; it reads MRCLAARVNYK. A helical; Signal-anchor for type II membrane protein membrane pass occupies residues 12 to 29; the sequence is TLIIICALFTLVTVLLWN. The Lumenal portion of the chain corresponds to 30–618; that stretch reads KCSSDKAIQF…YLKGSRAKHN (589 aa). Residues Tyr-180, 185 to 187, Gln-202, Tyr-210, Gln-213, and Gln-216 each bind substrate; that span reads RDR. Ca(2+) is bound by residues Thr-238, Glu-240, Thr-269, Asn-270, and Asp-393. Substrate contacts are provided by residues 430–433, 500–501, Asn-511, Tyr-515, Tyr-561, Arg-564, and 573–582; these read KLGE, EY, and NLARWDYHTT.

Belongs to the D-glucuronyl C5-epimerase family. Homodimer. Interacts with HS2ST1. As to expression, widely expressed with highest levels in lung and lowest levels in spleen.

The protein resides in the golgi apparatus membrane. The enzyme catalyses [heparosan-N-sulfate](n) = [heparan-N-sulfate](n). It participates in glycan metabolism; heparan sulfate biosynthesis. The protein operates within glycan metabolism; heparin biosynthesis. Converts D-glucuronic acid residues adjacent to N-sulfate sugar residues to L-iduronic acid residues, both in maturing heparan sulfate (HS) and heparin chains. This is important for further modifications that determine the specificity of interactions between these glycosaminoglycans and proteins. The polypeptide is D-glucuronyl C5-epimerase (Glce) (Mus musculus (Mouse)).